Reading from the N-terminus, the 684-residue chain is Early phosphoprotein p84 (684 aa).

5 disordered regions span residues 166–301, 317–336, 357–393, 407–452, and 569–657; these read LGGS…MSLP, SSAV…HHNA, VVSS…AAAT, RAPA…SPRF, and SNSS…GPSF. Basic and acidic residues predominate over residues 180–191; the sequence is EQQRRRQEQRHE. Gly residues predominate over residues 201 to 220; sequence AGGGGGGGASGGGGGGGSGG. 2 stretches are compositionally biased toward basic and acidic residues: residues 232–245 and 258–272; these read RDPR…ERRP and REAK…HEGH. The Nuclear localization signal motif lies at 261-264; that stretch reads KRQK. Positions 285-296 are enriched in gly residues; that stretch reads GGAGGGGGGGSG. The segment covering 326–335 has biased composition (basic residues); it reads NHHHHHHHHN. Residues 359 to 377 show a composition bias toward low complexity; that stretch reads SSPSSTSPSSLLSLPRPSS. The segment covering 425–442 has biased composition (polar residues); it reads STTPVSNCRVPPNSQESA. Over residues 578-587 the composition is skewed to pro residues; the sequence is PLPPPPPPPG. The segment covering 598–608 has biased composition (gly residues); sequence RGGGGGGGGGR. A compositionally biased stretch (low complexity) spans 612-622; that stretch reads RQAASSSSSSS.

The protein belongs to the herpesviridae U79/UL112 family. In terms of assembly, isoforms 1, 2, 3 and 4 interacts with themselves and with each other via their shared N-terminal regions; these interactions are important to both their intranuclear targeting and the recruitment of UL44 to subnuclear sites for viral replication.

It is found in the host nucleus. The protein resides in the virion. In terms of biological role, needed for efficient replication. Recruits the DNA polymerase processivity factor to pre-replication foci. This is Early phosphoprotein p84 (UL112/UL113) from Homo sapiens (Human).